Consider the following 323-residue polypeptide: Ribonuclease Z (323 aa).

Positions 62, 64, 66, 67, 140, 211, and 270 each coordinate Zn(2+). Asp-66 functions as the Proton acceptor in the catalytic mechanism.

It belongs to the RNase Z family. In terms of assembly, homodimer. It depends on Zn(2+) as a cofactor.

It catalyses the reaction Endonucleolytic cleavage of RNA, removing extra 3' nucleotides from tRNA precursor, generating 3' termini of tRNAs. A 3'-hydroxy group is left at the tRNA terminus and a 5'-phosphoryl group is left at the trailer molecule.. Functionally, zinc phosphodiesterase, which displays some tRNA 3'-processing endonuclease activity. Probably involved in tRNA maturation, by removing a 3'-trailer from precursor tRNA. The polypeptide is Ribonuclease Z (Marinobacter nauticus (strain ATCC 700491 / DSM 11845 / VT8) (Marinobacter aquaeolei)).